The chain runs to 202 residues: ATP-dependent Clp protease proteolytic subunit (202 aa).

Ser98 acts as the Nucleophile in catalysis. The active site involves His123.

This sequence belongs to the peptidase S14 family. Fourteen ClpP subunits assemble into 2 heptameric rings which stack back to back to give a disk-like structure with a central cavity, resembling the structure of eukaryotic proteasomes.

The protein resides in the cytoplasm. The catalysed reaction is Hydrolysis of proteins to small peptides in the presence of ATP and magnesium. alpha-casein is the usual test substrate. In the absence of ATP, only oligopeptides shorter than five residues are hydrolyzed (such as succinyl-Leu-Tyr-|-NHMec, and Leu-Tyr-Leu-|-Tyr-Trp, in which cleavage of the -Tyr-|-Leu- and -Tyr-|-Trp bonds also occurs).. Cleaves peptides in various proteins in a process that requires ATP hydrolysis. Has a chymotrypsin-like activity. Plays a major role in the degradation of misfolded proteins. The polypeptide is ATP-dependent Clp protease proteolytic subunit (Solidesulfovibrio magneticus (strain ATCC 700980 / DSM 13731 / RS-1) (Desulfovibrio magneticus)).